The chain runs to 331 residues: Glutaminase (331 aa).

The substrate site is built by S77, N129, E173, N180, Y204, Y256, and V274.

The protein belongs to the glutaminase family. Homotetramer.

It carries out the reaction L-glutamine + H2O = L-glutamate + NH4(+). The protein is Glutaminase of Oceanobacillus iheyensis (strain DSM 14371 / CIP 107618 / JCM 11309 / KCTC 3954 / HTE831).